The primary structure comprises 294 residues: tRNA dimethylallyltransferase (294 aa).

Gly-10–Thr-17 contacts ATP. Substrate is bound at residue Thr-12 to Thr-17. An interaction with substrate tRNA region spans residues Asp-35–Gln-38.

It belongs to the IPP transferase family. As to quaternary structure, monomer. The cofactor is Mg(2+).

The catalysed reaction is adenosine(37) in tRNA + dimethylallyl diphosphate = N(6)-dimethylallyladenosine(37) in tRNA + diphosphate. Its function is as follows. Catalyzes the transfer of a dimethylallyl group onto the adenine at position 37 in tRNAs that read codons beginning with uridine, leading to the formation of N6-(dimethylallyl)adenosine (i(6)A). This chain is tRNA dimethylallyltransferase, found in Streptococcus sanguinis (strain SK36).